Consider the following 512-residue polypeptide: Rab11 family-interacting protein 2 (512 aa).

The region spanning 1-120 is the C2 domain; sequence MMLSEQAQKW…DKQRRKTEWF (120 aa). Positions 15–102 are necessary for its cellular translocation to the plasma membrane; that stretch reads VQVTVLQAKD…GLDKFLGQVA (88 aa). Disordered regions lie at residues 169–239 and 262–285; these read DKMK…MSSE and VPES…KMNQ. Polar residues predominate over residues 178 to 188; that stretch reads GTFSDTSSAII. Residues 226-236 show a composition bias toward low complexity; the sequence is HSMSDLSGSHM. Ser-227 carries the post-translational modification Phosphoserine; by MARK2. Ser-277 bears the Phosphoserine mark. The short motif at 323–325 is the NPF 1 element; that stretch reads NPF. Residues 361–374 are compositionally biased toward basic and acidic residues; it reads ERVTGKKDSRRSDK. The disordered stretch occupies residues 361 to 392; sequence ERVTGKKDSRRSDKLNNGGSDSPCDLKSPNAF. Short sequence motifs (NPF) lie at residues 406-408 and 440-442; these read NPF. The FIP-RBD domain occupies 437-499; sequence PDSNPFDATA…EETPSILRVP (63 aa). The segment at 465-512 is necessary for interaction with AP2A1, RAB11A, subcellular location, endocytosis activity and homooligomerization; that stretch reads ELLRRKDTHIRELEDYIDNLLVRVMEETPSILRVPYEPSRKAGKFSNS.

Homooligomerizes in a Rab11-independent manner. Forms a heterooligomeric complex with RAB11FIP4. Interacts with AP2A1, MYO5B, RAB25 and REPS1. Interacts with RAB11A and RAB11B (activated GTP-bound form). Interacts with NPC1L1. Interacts (via NPF motifs) with EHD1 and EHD3. Interacts with TICAM2; this interaction directs RAB11FIP2 to the phagosome. Interacts with RAB14 and RAB25 (GTP-bound forms). In terms of processing, phosphorylation at Ser-227 by MARK2 regulates epithelial cell polarity.

The protein localises to the cell projection. It localises to the phagocytic cup. It is found in the cell membrane. The protein resides in the recycling endosome membrane. In terms of biological role, a Rab11 effector binding preferentially phosphatidylinositol 3,4,5-trisphosphate (PtdInsP3) and phosphatidic acid (PA) and acting in the regulation of the transport of vesicles from the endosomal recycling compartment (ERC) to the plasma membrane. Involved in insulin granule exocytosis. Also involved in receptor-mediated endocytosis and membrane trafficking of recycling endosomes, probably originating from clathrin-coated vesicles. Required in a complex with MYO5B and RAB11 for the transport of NPC1L1 to the plasma membrane. Also acts as a regulator of cell polarity. Plays an essential role in phagocytosis through a mechanism involving TICAM2, RAC1 and CDC42 Rho GTPases for controlling actin-dynamics. The sequence is that of Rab11 family-interacting protein 2 (RAB11FIP2) from Homo sapiens (Human).